A 60-amino-acid chain; its full sequence is Large ribosomal subunit protein bL32 (60 aa).

It belongs to the bacterial ribosomal protein bL32 family.

The sequence is that of Large ribosomal subunit protein bL32 from Moorella thermoacetica (strain ATCC 39073 / JCM 9320).